The primary structure comprises 766 residues: EMILIN-3 (766 aa).

The N-terminal stretch at 1–22 (MGRRRLLVWLCAVAALLSGAQA) is a signal peptide. Positions 55–131 (HKALCAYVVH…PGFTGKRCPE (77 aa)) constitute an EMI domain. Cystine bridges form between Cys-59-Cys-121, Cys-86-Cys-92, and Cys-120-Cys-129. A glycan (N-linked (GlcNAc...) asparagine) is linked at Asn-66. The tract at residues 132–179 (HLTDHGAASPQLEPEPQIPSGQLDPGPRPPSYSRAAPSPHGRKGPGLF) is disordered. A glycan (N-linked (GlcNAc...) asparagine) is linked at Asn-443. Positions 467–491 (GTMLEERVQSLEERLATLAGELSHD) form a coiled coil. N-linked (GlcNAc...) asparagine glycans are attached at residues Asn-562, Asn-616, and Asn-732. 2 coiled-coil regions span residues 615 to 663 (ANTS…QLKA) and 726 to 761 (SHVDQLNRTLAQHTQDIARLRDDLLDCQAQLAEQVR).

The protein localises to the secreted. It is found in the extracellular space. It localises to the extracellular matrix. This chain is EMILIN-3 (EMILIN3), found in Homo sapiens (Human).